Reading from the N-terminus, the 370-residue chain is UDP-N-acetylglucosamine--N-acetylmuramyl-(pentapeptide) pyrophosphoryl-undecaprenol N-acetylglucosamine transferase (370 aa).

Residues 20 to 22 (TAG), asparagine 134, arginine 170, serine 204, isoleucine 257, and glutamine 301 contribute to the UDP-N-acetyl-alpha-D-glucosamine site.

It belongs to the glycosyltransferase 28 family. MurG subfamily.

It localises to the cell membrane. The catalysed reaction is di-trans,octa-cis-undecaprenyl diphospho-N-acetyl-alpha-D-muramoyl-L-alanyl-D-glutamyl-meso-2,6-diaminopimeloyl-D-alanyl-D-alanine + UDP-N-acetyl-alpha-D-glucosamine = di-trans,octa-cis-undecaprenyl diphospho-[N-acetyl-alpha-D-glucosaminyl-(1-&gt;4)]-N-acetyl-alpha-D-muramoyl-L-alanyl-D-glutamyl-meso-2,6-diaminopimeloyl-D-alanyl-D-alanine + UDP + H(+). It participates in cell wall biogenesis; peptidoglycan biosynthesis. In terms of biological role, cell wall formation. Catalyzes the transfer of a GlcNAc subunit on undecaprenyl-pyrophosphoryl-MurNAc-pentapeptide (lipid intermediate I) to form undecaprenyl-pyrophosphoryl-MurNAc-(pentapeptide)GlcNAc (lipid intermediate II). In Corynebacterium jeikeium (strain K411), this protein is UDP-N-acetylglucosamine--N-acetylmuramyl-(pentapeptide) pyrophosphoryl-undecaprenol N-acetylglucosamine transferase.